A 298-amino-acid polypeptide reads, in one-letter code: MSANNYLFSGSIVAIVTPMDSSGEIDFVRLKSLVEHHIAAGTDAIVSVGTTGEAATLSIDENVKTILKTVEFADGRIPVIAGAGANATSEAIVMTKLLNDSGVAGCLSVVPYYNKPTQEGMYQHFKAIAECTDLPQILYNVPSRTGSDLLPETVARLAKINNIVAIKEATGDLSRVAKIKELAGEDFIFLSGDDATGLESIKLGGQGVISVTNNVAAADMAKMCHLALNGQFEEAEQINQRLMALHKNLFVESNPIPVKWAAYRLGLIDTPTLRLPLTTLSEHLQPKVEDALKIAGLL.

Threonine 51 provides a ligand contact to pyruvate. The Proton donor/acceptor role is filled by tyrosine 139. Catalysis depends on lysine 167, which acts as the Schiff-base intermediate with substrate. Isoleucine 209 is a pyruvate binding site.

The protein belongs to the DapA family. In terms of assembly, homotetramer; dimer of dimers.

It localises to the cytoplasm. The catalysed reaction is L-aspartate 4-semialdehyde + pyruvate = (2S,4S)-4-hydroxy-2,3,4,5-tetrahydrodipicolinate + H2O + H(+). It participates in amino-acid biosynthesis; L-lysine biosynthesis via DAP pathway; (S)-tetrahydrodipicolinate from L-aspartate: step 3/4. Its function is as follows. Catalyzes the condensation of (S)-aspartate-beta-semialdehyde [(S)-ASA] and pyruvate to 4-hydroxy-tetrahydrodipicolinate (HTPA). The chain is 4-hydroxy-tetrahydrodipicolinate synthase from Pasteurella multocida (strain Pm70).